Reading from the N-terminus, the 354-residue chain is Methylthioribose-1-phosphate isomerase (354 aa).

Residues 45-47, Arg87, and Gln204 contribute to the substrate site; that span reads RGA. The active-site Proton donor is the Asp245. 255–256 serves as a coordination point for substrate; that stretch reads NK.

Belongs to the eIF-2B alpha/beta/delta subunits family. MtnA subfamily.

The enzyme catalyses 5-(methylsulfanyl)-alpha-D-ribose 1-phosphate = 5-(methylsulfanyl)-D-ribulose 1-phosphate. It participates in amino-acid biosynthesis; L-methionine biosynthesis via salvage pathway; L-methionine from S-methyl-5-thio-alpha-D-ribose 1-phosphate: step 1/6. Functionally, catalyzes the interconversion of methylthioribose-1-phosphate (MTR-1-P) into methylthioribulose-1-phosphate (MTRu-1-P). In Chlorobaculum tepidum (strain ATCC 49652 / DSM 12025 / NBRC 103806 / TLS) (Chlorobium tepidum), this protein is Methylthioribose-1-phosphate isomerase.